Consider the following 208-residue polypeptide: A-type ATP synthase subunit E (208 aa).

Belongs to the V-ATPase E subunit family. As to quaternary structure, has multiple subunits with at least A(3), B(3), C, D, E, F, H, I and proteolipid K(x).

The protein resides in the cell membrane. Functionally, component of the A-type ATP synthase that produces ATP from ADP in the presence of a proton gradient across the membrane. This chain is A-type ATP synthase subunit E, found in Ignicoccus hospitalis (strain KIN4/I / DSM 18386 / JCM 14125).